The following is a 393-amino-acid chain: GTP exchange factor for ARFs 1 (393 aa).

Residues 1-12 are compositionally biased toward polar residues; the sequence is MSSRYSERNGLS. The tract at residues 1-21 is disordered; that stretch reads MSSRYSERNGLSETEKMTLPK. Residues 12-54 are a coiled coil; it reads SETEKMTLPKVRKRKAQLVDEIEALKNEVREVDEELDQVYYTH. The region spanning 53 to 239 is the SEC7 domain; sequence THPKSKEYHK…TEVYESVSVT (187 aa). The region spanning 261–377 is the PH domain; that stretch reads HAEREGWLFK…MRSWINAISR (117 aa).

Promotes guanine-nucleotide exchange on ARF. Promotes the activation of ARF through replacement of GDP with GTP. Plays a role in cell shedding during embryogenesis, probably by promoting the endocytosis of cell adhesion molecules. This Caenorhabditis elegans protein is GTP exchange factor for ARFs 1 (grp-1).